Consider the following 92-residue polypeptide: Small ribosomal subunit protein uS19 (92 aa).

Belongs to the universal ribosomal protein uS19 family.

Protein S19 forms a complex with S13 that binds strongly to the 16S ribosomal RNA. This Brucella ovis (strain ATCC 25840 / 63/290 / NCTC 10512) protein is Small ribosomal subunit protein uS19.